The following is a 385-amino-acid chain: UPF0284 protein P9215_05181 (385 aa).

Belongs to the UPF0284 family.

This Prochlorococcus marinus (strain MIT 9215) protein is UPF0284 protein P9215_05181.